We begin with the raw amino-acid sequence, 557 residues long: Kelch repeat and BTB domain-containing protein 2 (557 aa).

In terms of domain architecture, BTB spans 26–95 (CDVIITIRDG…LYNRHISSMN (70 aa)). The BACK domain maps to 143 to 223 (IVKYIKRMLM…CIDIQNLDKK (81 aa)). Kelch repeat units lie at residues 305–352 (EIII…VIDD), 353–399 (TIYA…VLDQ), and 415–464 (SVHA…SHED).

Interacts (via BTB domain) with host CUL3.

It is found in the host cytoplasm. Functionally, probable substrate-specific adapter of CUL3-containing E3 ubiquitin-protein ligases which mediate the ubiquitination and subsequent proteasomal degradation of host target proteins. The polypeptide is Kelch repeat and BTB domain-containing protein 2 (KBTB2) (Cowpox virus (strain Brighton Red) (CPV)).